A 485-amino-acid polypeptide reads, in one-letter code: Glutamyl-tRNA(Gln) amidotransferase subunit A (485 aa).

Active-site charge relay system residues include Lys76 and Ser151. Ser175 functions as the Acyl-ester intermediate in the catalytic mechanism.

The protein belongs to the amidase family. GatA subfamily. In terms of assembly, heterotrimer of A, B and C subunits.

It carries out the reaction L-glutamyl-tRNA(Gln) + L-glutamine + ATP + H2O = L-glutaminyl-tRNA(Gln) + L-glutamate + ADP + phosphate + H(+). In terms of biological role, allows the formation of correctly charged Gln-tRNA(Gln) through the transamidation of misacylated Glu-tRNA(Gln) in organisms which lack glutaminyl-tRNA synthetase. The reaction takes place in the presence of glutamine and ATP through an activated gamma-phospho-Glu-tRNA(Gln). This is Glutamyl-tRNA(Gln) amidotransferase subunit A from Pelagibacter ubique (strain HTCC1062).